The following is an 82-amino-acid chain: High-potential iron-sulfur protein (82 aa).

Positions 42, 45, 60, and 74 each coordinate [4Fe-4S] cluster.

The protein belongs to the high-potential iron-sulfur protein (HiPIP) family. As to quaternary structure, homodimer.

It localises to the periplasm. Functionally, specific class of high-redox-potential 4Fe-4S ferredoxins. Functions in anaerobic electron transport in most purple and in some other photosynthetic bacteria and in at least one genus (Paracoccus) of halophilic, denitrifying bacteria. The protein is High-potential iron-sulfur protein (hip) of Marichromatium purpuratum (Chromatium purpuratum).